Here is a 321-residue protein sequence, read N- to C-terminus: tRNA(Ile)-lysidine synthase (321 aa).

Residue 21 to 26 (SYGSDS) coordinates ATP.

This sequence belongs to the tRNA(Ile)-lysidine synthase family.

Its subcellular location is the cytoplasm. It carries out the reaction cytidine(34) in tRNA(Ile2) + L-lysine + ATP = lysidine(34) in tRNA(Ile2) + AMP + diphosphate + H(+). In terms of biological role, ligates lysine onto the cytidine present at position 34 of the AUA codon-specific tRNA(Ile) that contains the anticodon CAU, in an ATP-dependent manner. Cytidine is converted to lysidine, thus changing the amino acid specificity of the tRNA from methionine to isoleucine. This chain is tRNA(Ile)-lysidine synthase, found in Campylobacter jejuni (strain RM1221).